The primary structure comprises 955 residues: Bifunctional glutamine synthetase adenylyltransferase/adenylyl-removing enzyme (955 aa).

The segment at 1 to 458 (MTAQAPLSVA…QFEQTFSDKQ (458 aa)) is adenylyl removase. An adenylyl transferase region spans residues 464-955 (CAAIWHADLL…GSIDAASPTP (492 aa)).

The protein belongs to the GlnE family. Requires Mg(2+) as cofactor.

It catalyses the reaction [glutamine synthetase]-O(4)-(5'-adenylyl)-L-tyrosine + phosphate = [glutamine synthetase]-L-tyrosine + ADP. The catalysed reaction is [glutamine synthetase]-L-tyrosine + ATP = [glutamine synthetase]-O(4)-(5'-adenylyl)-L-tyrosine + diphosphate. Involved in the regulation of glutamine synthetase GlnA, a key enzyme in the process to assimilate ammonia. When cellular nitrogen levels are high, the C-terminal adenylyl transferase (AT) inactivates GlnA by covalent transfer of an adenylyl group from ATP to specific tyrosine residue of GlnA, thus reducing its activity. Conversely, when nitrogen levels are low, the N-terminal adenylyl removase (AR) activates GlnA by removing the adenylyl group by phosphorolysis, increasing its activity. The regulatory region of GlnE binds the signal transduction protein PII (GlnB) which indicates the nitrogen status of the cell. The protein is Bifunctional glutamine synthetase adenylyltransferase/adenylyl-removing enzyme of Ralstonia nicotianae (strain ATCC BAA-1114 / GMI1000) (Ralstonia solanacearum).